Reading from the N-terminus, the 419-residue chain is Dual specificity mitogen-activated protein kinase kinase 7 (419 aa).

Ala-2 bears the N-acetylalanine mark. Residues 2–30 adopt a coiled-coil conformation; it reads AASSLEQKLSRLEAKLKQENREARRRIDL. Positions 18–30 are enriched in basic and acidic residues; that stretch reads KQENREARRRIDL. A disordered region spans residues 18 to 77; the sequence is KQENREARRRIDLNLDISPQRPRPTLQLPLANDGGSRSPSSESSPQHPTPPSRPRHMLGL. Low complexity predominate over residues 36-63; that stretch reads PQRPRPTLQLPLANDGGSRSPSSESSPQ. Positions 37-57 are d Domain; sequence QRPRPTLQLPLANDGGSRSPS. The region spanning 120 to 380 is the Protein kinase domain; that stretch reads LENLGEMGSG…YNKLLEHSFI (261 aa). ATP is bound by residues 126-134 and Lys-149; that span reads MGSGTCGQV. The active-site Proton acceptor is Asp-243. A Phosphoserine; by MAP3K modification is found at Ser-271. A Phosphothreonine; by MAP3K modification is found at Thr-275. Residues 377 to 400 form a DVD domain region; that stretch reads HSFIKHYETLEVDVASWFKDVMAK. The residue at position 411 (Ser-411) is a Phosphoserine.

Belongs to the protein kinase superfamily. STE Ser/Thr protein kinase family. MAP kinase kinase subfamily. Interacts with VRK2. Interacts (via its D domain) with its substrates MAPK8/JNK1, MAPK9/JNK2 and MAPK10/JNK3. Interacts (via its DVD domain) with MAP3Ks activators like MAP3K5/ASK1 and MAP3K1/MEKK1. Interacts with MAPK8IP1/JIP1, MAPK8IP2/JIP2 and MAPK8IP3/JIP3 scaffold proteins. Interacts with RASSF7, the interaction promotes phosphorylation. Found in a complex with SH3RF1, RAC1, MAP3K11/MLK3, MAPK8IP1/JIP1 and MAPK8/JNK1. Found in a complex with SH3RF1, RAC2, MAP3K7/TAK1, MAPK8IP1/JIP1, MAPK8/JNK1 and MAPK9/JNK2. Mg(2+) is required as a cofactor. Post-translationally, activated by phosphorylation on Ser-271 and Thr-275 by MAP kinase kinase kinases (MAP3Ks).

It is found in the nucleus. It localises to the cytoplasm. The catalysed reaction is L-seryl-[protein] + ATP = O-phospho-L-seryl-[protein] + ADP + H(+). It catalyses the reaction L-threonyl-[protein] + ATP = O-phospho-L-threonyl-[protein] + ADP + H(+). The enzyme catalyses L-tyrosyl-[protein] + ATP = O-phospho-L-tyrosyl-[protein] + ADP + H(+). With respect to regulation, activated by phosphorylation by specific MAP kinase kinase kinases such as MAP3K1/MEKK1, MAP3K3/MEKK3, MAP3K11/MLK3 and MAP3K12/DLK. In terms of biological role, dual specificity protein kinase which acts as an essential component of the MAP kinase signal transduction pathway. Essential component of the stress-activated protein kinase/c-Jun N-terminal kinase (SAP/JNK) signaling pathway. With MAP2K4/MKK4, is the one of the only known kinase to directly activate the stress-activated protein kinase/c-Jun N-terminal kinases MAPK8/JNK1, MAPK9/JNK2 and MAPK10/JNK3. MAP2K4/MKK4 and MAP2K7/MKK7 both activate the JNKs by phosphorylation, but they differ in their preference for the phosphorylation site in the Thr-Pro-Tyr motif. MAP2K4/MKK4 shows preference for phosphorylation of the Tyr residue and MAP2K7/MKK7 for the Thr residue. The monophosphorylation of JNKs on the Thr residue is sufficient to increase JNK activity indicating that MAP2K7/MKK7 is important to trigger JNK activity, while the additional phosphorylation of the Tyr residue by MAP2K4/MKK4 ensures optimal JNK activation. Has a specific role in JNK signal transduction pathway activated by pro-inflammatory cytokines. The MKK/JNK signaling pathway is also involved in mitochondrial death signaling pathway, including the release cytochrome c, leading to apoptosis. Part of a non-canonical MAPK signaling pathway, composed of the upstream MAP3K12 kinase and downstream MAP kinases MAPK1/ERK2 and MAPK3/ERK1, that enhances the AP-1-mediated transcription of APP in response to APOE. This is Dual specificity mitogen-activated protein kinase kinase 7 from Rattus norvegicus (Rat).